The primary structure comprises 509 residues: Cobyric acid synthase (509 aa).

The 198-residue stretch at 262–459 (EIKVGIIKLP…IHGIFENDSW (198 aa)) folds into the GATase cobBQ-type domain. The active-site Nucleophile is the C343. H451 is an active-site residue.

Belongs to the CobB/CobQ family. CobQ subfamily.

The protein operates within cofactor biosynthesis; adenosylcobalamin biosynthesis. In terms of biological role, catalyzes amidations at positions B, D, E, and G on adenosylcobyrinic A,C-diamide. NH(2) groups are provided by glutamine, and one molecule of ATP is hydrogenolyzed for each amidation. This chain is Cobyric acid synthase, found in Prochlorococcus marinus (strain MIT 9215).